Consider the following 343-residue polypeptide: L-lysine cyclodeaminase (343 aa).

It belongs to the ornithine cyclodeaminase/mu-crystallin family. It depends on NAD(+) as a cofactor.

The catalysed reaction is L-lysine = L-pipecolate + NH4(+). It functions in the pathway antibiotic biosynthesis. Its activity is regulated as follows. Inhibited by nipecotic acid and thiazolidine-2-carboxylic acid. Its function is as follows. Converts L-lysine to L-pipecolate, which is incorporated into multiple secondary metabolite products, including rapamycin, tobulysin, virginiamycin and pristinamycin. In Streptomyces rapamycinicus (strain ATCC 29253 / DSM 41530 / NRRL 5491 / AYB-994) (Streptomyces hygroscopicus (strain ATCC 29253)), this protein is L-lysine cyclodeaminase (rapL).